A 90-amino-acid polypeptide reads, in one-letter code: UPF0298 protein SSU05_1549 (90 aa).

The protein belongs to the UPF0298 family.

It is found in the cytoplasm. This Streptococcus suis (strain 05ZYH33) protein is UPF0298 protein SSU05_1549.